Consider the following 575-residue polypeptide: Transmembrane protein 108 (575 aa).

The chain crosses the membrane as a helical span at residues 9 to 29 (YCQLLSFLLILALTEALAFAI). Residues 31–169 (EPSPRESLQV…TTTRRPPRPP (139 aa)) form an interaction with SH3GL2 region. The tract at residues 65-398 (MLTPNPDGPP…PSRVSESTIS (334 aa)) is disordered. A compositionally biased stretch (low complexity) spans 74 to 87 (PSQAAAPMATPTPR). The segment covering 95-115 (HTISTIAATVTAPHSESSLST) has biased composition (polar residues). Over residues 146-160 (PPGATSRPTTAPPRT) the composition is skewed to low complexity. Positions 173-407 (RKGAGNSSRP…SGAKEETVAT (235 aa)) are interaction with DST (isoform 1). Positions 244 to 271 (YSSSPQPQTVAATTVPSNTSWAPTTTSL) are enriched in polar residues. The segment covering 290-318 (TFTSQGGTPDATAASGAPVSPQAAPVPSQ) has biased composition (low complexity). The segment covering 329-352 (PSHSDSWLTVTPGTSRPLSTSSGV) has biased composition (polar residues). Low complexity predominate over residues 353-366 (FTAATGPTPAAFDT). Over residues 367 to 398 (SVSAPSQGIPQGASTTPQAPTHPSRVSESTIS) the composition is skewed to polar residues. Residues 469–489 (IAWVILAISVPISSCSVLLTV) form a helical membrane-spanning segment. The interval 490-575 (CCMKRKKKTA…FVGNDQVSEI (86 aa)) is interaction with CYFIP2.

As to quaternary structure, interacts with DST (isoform 1). Interacts with SH3GL2. Interacts (via N-terminus) with CYFIP1 and CYFIP2; the interactions associate TMEM108 with the WAVE1 complex. Post-translationally, glycosylated.

It is found in the membrane. The protein localises to the postsynaptic density. It localises to the endosome membrane. The protein resides in the cell projection. Its subcellular location is the axon. It is found in the dendrite. The protein localises to the early endosome. In terms of biological role, transmembrane protein required for proper cognitive functions. Involved in the development of dentate gyrus (DG) neuron circuitry, is necessary for AMPA receptors surface expression and proper excitatory postsynaptic currents of DG granule neurons. Regulates the organization and stability of the microtubule network of sensory neurons to allow axonal transport. Through the interaction with DST, mediates the docking of the dynein/dynactin motor complex to vesicle cargos for retrograde axonal transport. In hippocampal neurons, required for BDNF-dependent dendrite outgrowth. Cooperates with SH3GL2 and recruits the WAVE1 complex to facilitate actin-dependent BDNF:NTRK2 early endocytic trafficking and mediate signaling from early endosomes. This chain is Transmembrane protein 108, found in Homo sapiens (Human).